Here is a 209-residue protein sequence, read N- to C-terminus: Imidazole glycerol phosphate synthase subunit HisH (209 aa).

A Glutamine amidotransferase type-1 domain is found at 1–205; it reads MIAIIDYGMG…KGVVETWKSS (205 aa). Cys79 acts as the Nucleophile in catalysis. Residues His180 and Glu182 contribute to the active site.

In terms of assembly, heterodimer of HisH and HisF.

Its subcellular location is the cytoplasm. It carries out the reaction 5-[(5-phospho-1-deoxy-D-ribulos-1-ylimino)methylamino]-1-(5-phospho-beta-D-ribosyl)imidazole-4-carboxamide + L-glutamine = D-erythro-1-(imidazol-4-yl)glycerol 3-phosphate + 5-amino-1-(5-phospho-beta-D-ribosyl)imidazole-4-carboxamide + L-glutamate + H(+). It catalyses the reaction L-glutamine + H2O = L-glutamate + NH4(+). The protein operates within amino-acid biosynthesis; L-histidine biosynthesis; L-histidine from 5-phospho-alpha-D-ribose 1-diphosphate: step 5/9. Its function is as follows. IGPS catalyzes the conversion of PRFAR and glutamine to IGP, AICAR and glutamate. The HisH subunit catalyzes the hydrolysis of glutamine to glutamate and ammonia as part of the synthesis of IGP and AICAR. The resulting ammonia molecule is channeled to the active site of HisF. The polypeptide is Imidazole glycerol phosphate synthase subunit HisH (Bacillus anthracis (strain A0248)).